The sequence spans 421 residues: ATP-dependent RNA helicase RhlB (421 aa).

The Q motif motif lies at 9–37 (QKFSDFALHPKVVEALEKKGFHNCTPIQA). A Helicase ATP-binding domain is found at 40-219 (LPLTLAGRDV…FEQMNNAEYI (180 aa)). 53-60 (AQTGTGKT) contributes to the ATP binding site. Residues 165-168 (DEAD) carry the DEAD box motif. The 146-residue stretch at 245–390 (RLLQTLIEEE…VSKYNPDALM (146 aa)) folds into the Helicase C-terminal domain. The segment at 392–421 (DLPKPLRLTRPRTGNGPRRTGAPRNRRRSG) is disordered. The segment covering 402 to 414 (PRTGNGPRRTGAP) has biased composition (low complexity).

It belongs to the DEAD box helicase family. RhlB subfamily. In terms of assembly, component of the RNA degradosome, which is a multiprotein complex involved in RNA processing and mRNA degradation.

The protein localises to the cytoplasm. The catalysed reaction is ATP + H2O = ADP + phosphate + H(+). In terms of biological role, DEAD-box RNA helicase involved in RNA degradation. Has RNA-dependent ATPase activity and unwinds double-stranded RNA. The protein is ATP-dependent RNA helicase RhlB of Escherichia fergusonii (strain ATCC 35469 / DSM 13698 / CCUG 18766 / IAM 14443 / JCM 21226 / LMG 7866 / NBRC 102419 / NCTC 12128 / CDC 0568-73).